Reading from the N-terminus, the 167-residue chain is Ribosome-binding factor A (167 aa).

The tract at residues 122–167 is disordered; it reads LAASAKHAGEADPYKGDSPEDIDEDDFDEEDTDLSGDNDLDEDANR. Residues 128-139 are compositionally biased toward basic and acidic residues; sequence HAGEADPYKGDS. The span at 140–167 shows a compositional bias: acidic residues; the sequence is PEDIDEDDFDEEDTDLSGDNDLDEDANR.

Belongs to the RbfA family. As to quaternary structure, monomer. Binds 30S ribosomal subunits, but not 50S ribosomal subunits or 70S ribosomes.

The protein resides in the cytoplasm. Its function is as follows. One of several proteins that assist in the late maturation steps of the functional core of the 30S ribosomal subunit. Associates with free 30S ribosomal subunits (but not with 30S subunits that are part of 70S ribosomes or polysomes). Required for efficient processing of 16S rRNA. May interact with the 5'-terminal helix region of 16S rRNA. In Paenarthrobacter aurescens (strain TC1), this protein is Ribosome-binding factor A.